Here is a 220-residue protein sequence, read N- to C-terminus: Large ribosomal subunit protein bL21 (220 aa).

Residues 109-158 (SKKVAAKPATSEEKAAEEKPAKAKKEAAEKGASPRETKAAPLFSAPEGEP) are disordered. Over residues 118-146 (TSEEKAAEEKPAKAKKEAAEKGASPRETK) the composition is skewed to basic and acidic residues.

This sequence belongs to the bacterial ribosomal protein bL21 family. In terms of assembly, part of the 50S ribosomal subunit. Contacts protein L20.

Its function is as follows. This protein binds to 23S rRNA in the presence of protein L20. This is Large ribosomal subunit protein bL21 from Chelativorans sp. (strain BNC1).